A 115-amino-acid polypeptide reads, in one-letter code: Nucleoid-associated protein Ccel_0243 (115 aa).

It belongs to the YbaB/EbfC family. Homodimer.

Its subcellular location is the cytoplasm. The protein localises to the nucleoid. Its function is as follows. Binds to DNA and alters its conformation. May be involved in regulation of gene expression, nucleoid organization and DNA protection. This is Nucleoid-associated protein Ccel_0243 from Ruminiclostridium cellulolyticum (strain ATCC 35319 / DSM 5812 / JCM 6584 / H10) (Clostridium cellulolyticum).